Reading from the N-terminus, the 142-residue chain is Large ribosomal subunit protein uL11 (142 aa).

The protein belongs to the universal ribosomal protein uL11 family. In terms of assembly, part of the ribosomal stalk of the 50S ribosomal subunit. Interacts with L10 and the large rRNA to form the base of the stalk. L10 forms an elongated spine to which L12 dimers bind in a sequential fashion forming a multimeric L10(L12)X complex. In terms of processing, one or more lysine residues are methylated.

Its function is as follows. Forms part of the ribosomal stalk which helps the ribosome interact with GTP-bound translation factors. The polypeptide is Large ribosomal subunit protein uL11 (Buchnera aphidicola subsp. Acyrthosiphon pisum (strain APS) (Acyrthosiphon pisum symbiotic bacterium)).